The chain runs to 348 residues: uncharacterized protein (348 aa).

Its function is as follows. May be involved in apoptosis regulation. This is an uncharacterized protein from Mus musculus (Mouse).